A 450-amino-acid chain; its full sequence is Phosphoglucosamine mutase (450 aa).

Serine 104 serves as the catalytic Phosphoserine intermediate. Residues serine 104, aspartate 245, aspartate 247, and aspartate 249 each coordinate Mg(2+). Serine 104 is subject to Phosphoserine.

The protein belongs to the phosphohexose mutase family. Mg(2+) is required as a cofactor. In terms of processing, activated by phosphorylation.

The enzyme catalyses alpha-D-glucosamine 1-phosphate = D-glucosamine 6-phosphate. Functionally, catalyzes the conversion of glucosamine-6-phosphate to glucosamine-1-phosphate. This Phenylobacterium zucineum (strain HLK1) protein is Phosphoglucosamine mutase.